We begin with the raw amino-acid sequence, 93 residues long: Transcription factor PRE3 (93 aa).

In terms of domain architecture, bHLH spans 6–61 (SRSRQSSGTSRISEDQINDLIIKLQQLLPELRDSRRSDKVSAARVLQDTCNYIRNL).

As to quaternary structure, homodimer. Interacts with BHLH 147, BHLH148, BHLH149, BHLH150 and IBH1. Interacts with SIEL. Expressed in root and shoot meristems, and young siliques. Low levels detected in all aerial tissues.

The protein resides in the nucleus. It is found in the cytoplasm. In terms of biological role, atypical and probable non DNA-binding bHLH transcription factor required for MONOPTEROS-dependent root initiation in embryo. Promotes the correct definition of the hypophysis cell division plane. Transcriptionally controlled by MONOPTEROS. Moves from its site of synthesis in pro-embryos cells into the hypophysis. Regulates brassinosteroid (BR) signaling by sequestering negative BR signaling components. May function as positive regulator of gibberellin signaling. May play a role in the regulation of light signaling and possibly auxin signaling. The sequence is that of Transcription factor PRE3 (PRE3) from Arabidopsis thaliana (Mouse-ear cress).